A 1447-amino-acid polypeptide reads, in one-letter code: MAHSKTRTNDGKITYPPGVKEISDKISKEEMVRRLKMVVKTFMDMDQDSEEEKELYLNLALHLASDFFLKHPDKDVRLLVACCLADIFRIYAPEAPYTSPDKLKDIFMFITRQLKGLEDTKSPQFNRYFYLLENIAWVKSYNICFELEDSNEIFTQLYRTLFSVINNGHNQKVHMHMVDLMSSIICEGDTVSQELLDTVLVNLVPAHKNLNKQAYDLAKALLKRTAQAIEPYITNFFNQVLMLGKTSISDLSEHVFDLILELYNIDSHLLLSVLPQLEFKLKSNDNEERLQVVKLLAKMFGAKDSELASQNKPLWQCYLGRFNDIHVPIRLECVKFASHCLMNHPDLAKDLTEYLKVRSHDPEEAIRHDVIVSIVTAAKKDILLVNDHLLNFVRERTLDKRWRVRKEAMMGLAQIYKKYALQSAAGKDAAKQIAWIKDKLLHIYYQNSIDDRLLVERIFAQYMVPHNLETTERMKCLYYLYATLDLNAVKALNEMWKCQNLLRHQVKDLLDLIKQPKTDASVKAIFSKVMVITRNLPDPGKAQDFMKKFTQVLEDDEKIRKQLEVLVSPTCSCKQAEGCVREITKKLGNPKQPTNPFLEMIKFLLERIAPVHIDTESISALIKQVNKSIDGTADDEDEGVPTDQAIRAGLELLKVLSFTHPISFHSAETFESLLACLKMDDEKVAEAALQIFKNTGSKIEEDFPHIRSALLPVLHHKSKKGPPRQAKYAIHCIHAIFSSKETQFAQIFEPLHKSLDPSNLEHLITPLVTIGHIALLAPDQFAAPLKSLVATFIVKDLLMNDRLPGKKTTKLWVPDEEVSPETMVKIQAIKMMVRWLLGMKNNHSKSGTSTLRLLTTILHSDGDLTEQGKISKPDMSRLRLAAGSAIVKLAQEPCYHEIITLEQYQLCALAINDECYQVRQVFAQKLHKGLSRLRLPLEYMAICALCAKDPVKERRAHARQCLVKNINVRREYLKQHAAVSEKLLSLLPEYVVPYTIHLLAHDPDYVKVQDIEQLKDVKECLWFVLEILMAKNENNSHAFIRKMVENIKQTKDAQGPDDAKMNEKLYTVCDVAMNIIMSKSTTYSLESPKDPVLPARFFTQPDKNFSNTKNYLPPEMKSFFTPGKPKTTNVLGAVNKPLSSAGKQSQTKSSRMETVSNASSSSNPSSPGRIKGRLDSSEMDHSENEDYTMSSPLPGKKSDKRDDSDLVRSELEKPRGRKKTPVTEQEEKLGMDDLTKLVQEQKPKGSQRSRKRGHTASESDEQQWPEEKRLKEDILENEDEQNSPPKKGKRGRPPKPLGGGTPKEEPTMKTSKKGSKKKSGPPAPEEEEEEERQSGNTEQKSKSKQHRVSRRAQQRAESPESSAIESTQSTPQKGRGRPSKTPSPSQPKKNVRVGRSKQAATKENDSSEEVDVFQGSSPVDDIPQEETEEEEVSTVNVRRRSAKRERR.

One copy of the HEAT repeat lies at 383–419; that stretch reads LLVNDHLLNFVRERTLDKRWRVRKEAMMGLAQIYKKY. Positions 1117–1447 are disordered; it reads KSFFTPGKPK…RRRSAKRERR (331 aa). Lysine 1136 is modified (N6-acetyllysine). Polar residues predominate over residues 1137–1155; it reads PLSSAGKQSQTKSSRMETV. 6 positions are modified to phosphoserine: serine 1140, serine 1162, serine 1166, serine 1176, serine 1182, and serine 1191. The segment covering 1156 to 1167 has biased composition (low complexity); it reads SNASSSSNPSSP. Residues 1172–1184 show a composition bias toward basic and acidic residues; that stretch reads GRLDSSEMDHSEN. 2 stretches are compositionally biased toward basic and acidic residues: residues 1196–1214 and 1225–1243; these read KKSD…LEKP and QEEK…EQKP. Residues 1245–1254 are compositionally biased toward basic residues; the sequence is GSQRSRKRGH. A DNA-binding region (a.T hook 1) is located at residues 1249–1261; sequence SRKRGHTASESDE. Threonine 1255 carries the phosphothreonine modification. Phosphoserine occurs at positions 1257 and 1259. The segment covering 1265-1274 has biased composition (basic and acidic residues); sequence PEEKRLKEDI. Position 1283 is a phosphoserine (serine 1283). Positions 1287–1299 form a DNA-binding region, a.T hook 2; that stretch reads KGKRGRPPKPLGG. The segment covering 1310 to 1319 has biased composition (basic residues); that stretch reads TSKKGSKKKS. Phosphoserine occurs at positions 1319 and 1334. A compositionally biased stretch (basic residues) spans 1342-1353; that stretch reads KSKQHRVSRRAQ. The segment covering 1355-1372 has biased composition (polar residues); that stretch reads RAESPESSAIESTQSTPQ. A phosphoserine mark is found at serine 1358 and serine 1366. Residue threonine 1367 is modified to Phosphothreonine. A Phosphoserine modification is found at serine 1369. Threonine 1370 and threonine 1381 each carry phosphothreonine. The a.T hook 3 DNA-binding region spans 1372-1384; it reads QKGRGRPSKTPSP. Over residues 1379-1388 the composition is skewed to low complexity; that stretch reads SKTPSPSQPK. Serine 1383 and serine 1417 each carry phosphoserine. Positions 1422–1432 are enriched in acidic residues; the sequence is IPQEETEEEEV. The span at 1437–1447 shows a compositional bias: basic residues; the sequence is VRRRSAKRERR.

This sequence belongs to the PDS5 family. Interacts with the cohesin complex. Interacts with RAD21; the interaction is direct. Interacts with WAPL (via FGF motifs) or CDCA5 (via the FGF motif); the interaction is direct, cohesin-dependent and competitive. Widely expressed.

The protein localises to the nucleus. Regulator of sister chromatid cohesion in mitosis which may stabilize cohesin complex association with chromatin. May couple sister chromatid cohesion during mitosis to DNA replication. Cohesion ensures that chromosome partitioning is accurate in both meiotic and mitotic cells and plays an important role in DNA repair. Plays a role in androgen-induced proliferative arrest in prostate cells. The chain is Sister chromatid cohesion protein PDS5 homolog B (PDS5B) from Homo sapiens (Human).